Consider the following 212-residue polypeptide: MEKKKGISMAVIKRLPKYHRYLQELMENDVDRISSKELSEKIGFTASQIRQDLNCFGDFGQQGYGYNVKELYNNIGSILGLTRDYNTVIIGAGNIGQAIANYNSFNRLGFKLKGIFDANPRMFGIKIRDVEIQDVEKLKDFVKENDIEIGIICVPRTNAQKVCNDLVEGGIKGIWNFAPIDLEVPKDIRVENVHLSESMMTLVYLLNHNDVK.

A DNA-binding region (H-T-H motif) is located at residues 17–56 (KYHRYLQELMENDVDRISSKELSEKIGFTASQIRQDLNCF). An NAD(+)-binding site is contributed by 91-96 (GAGNIG).

Belongs to the transcriptional regulatory Rex family. As to quaternary structure, homodimer.

It is found in the cytoplasm. In terms of biological role, modulates transcription in response to changes in cellular NADH/NAD(+) redox state. The sequence is that of Redox-sensing transcriptional repressor Rex from Clostridium perfringens (strain ATCC 13124 / DSM 756 / JCM 1290 / NCIMB 6125 / NCTC 8237 / Type A).